The sequence spans 704 residues: Meprin A subunit beta (704 aa).

Residues 1 to 20 (MDARHQPWFLVFATFLLVSG) form the signal peptide. A propeptide spanning residues 21 to 64 (LPAPEKFVKDIDGGIDQDIFDINQGLGLDLFEGDIKLEANGKNS) is cleaved from the precursor. Residues 21-654 (LPAPEKFVKD…RCEKRGSTRD (634 aa)) are Extracellular-facing. One can recognise a Peptidase M12A domain in the interval 63-257 (NSIIGDHKRW…LKLNQLYNCT (195 aa)). Intrachain disulfides connect Cys104-Cys256, Cys125-Cys145, and Cys266-Cys428. His153 contributes to the Zn(2+) binding site. Glu154 is a catalytic residue. Residues His157 and His163 each coordinate Zn(2+). Residues Asn193, Asn219, Asn255, Asn316, Asn422, Asn437, Asn529, Asn548, and Asn593 are each glycosylated (N-linked (GlcNAc...) asparagine). Positions 261-430 (SFMDSCDFEL…INLSETRCPH (170 aa)) constitute an MAM domain. One can recognise an MATH domain in the interval 431–586 (HIWHIQNFTQ…GDDIYILLTV (156 aa)). An EGF-like domain is found at 607-647 (VHNACSEVVCQNGGICVVQDGRAECKCPAGEDWWYMGKRCE). 3 disulfides stabilise this stretch: Cys611–Cys622, Cys616–Cys631, and Cys633–Cys646. The chain crosses the membrane as a helical span at residues 655–678 (TVIIAVSSTVTVFAVMLIITLVSV). The Cytoplasmic segment spans residues 679–704 (YCTRRKYRKKARANTAAMTLENQHAF). Thr697 carries the post-translational modification Phosphothreonine.

Homotetramer consisting of disulfide-linked beta subunits, or heterotetramer of two alpha and two beta subunits formed by non-covalent association of two disulfide-linked heterodimers. Interacts with MBL2 through its carbohydrate moiety. This interaction may inhibit its catalytic activity. Interacts with TSPAN8. The cofactor is Zn(2+). Post-translationally, proteolytically activated by trypsin in the intestinal lumen and kallikrein-related peptidases in other tissues. N-glycosylated; contains high mannose and/or complex biantennary structures. In terms of processing, phosphorylated by PKC at multiple sites of its cytoplasmic part. Phosphorylation dcreases activity at the cell surface, leading to diminished substrate cleavage. Isoform 1 is expressed in kidney, intestinal brush borders, and salivary ducts. Isoform 2 has been found in carcinoma cells.

The protein localises to the cell membrane. Its subcellular location is the secreted. It carries out the reaction Hydrolysis of proteins, including azocasein, and peptides. Hydrolysis of 5-His-|-Leu-6, 6-Leu-|-Cys-7, 14-Ala-|-Leu-15 and 19-Cys-|-Gly-20 bonds in insulin B chain.. With respect to regulation, strongly inhibited by fetuin-A/AHSG. Inhibited by cysteine and by the metal ion chelators EDTA and 1,10-phenanthroline. Not inhibited by 3,4-dichloroisocourmarin, soybean trypsin inhibitor, or the cysteine proteinase inhibitors iodoacetic acid and E-64. Membrane metallopeptidase that sheds many membrane-bound proteins. Exhibits a strong preference for acidic amino acids at the P1' position. Known substrates include: FGF19, VGFA, IL1B, IL18, procollagen I and III, E-cadherin, KLK7, gastrin, ADAM10, tenascin-C. The presence of several pro-inflammatory cytokine among substrates implicate MEP1B in inflammation. It is also involved in tissue remodeling due to its capability to degrade extracellular matrix components. In Mus musculus (Mouse), this protein is Meprin A subunit beta (Mep1b).